A 400-amino-acid polypeptide reads, in one-letter code: Large envelope protein (400 aa).

N-acetylmethionine is present on methionine 1. Disordered regions lie at residues 1–53, 88–118, and 145–169; these read MGGW…DHWP, VPVAPPPASTNRQSGRQPTPISPPLRDSHPQ, and GSSSGTVNPVPTTASPISSISSRTG. Glycine 2 carries N-myristoyl glycine; by host lipidation. The tract at residues 2–119 is pre-S1; sequence GGWSSKPRQG…PPLRDSHPQA (118 aa). The pre-S stretch occupies residues 2–174; the sequence is GGWSSKPRQG…SSRTGDPAPN (173 aa). The Virion surface; in external conformation segment spans residues 2 to 181; the sequence is GGWSSKPRQG…APNMENTTSG (180 aa). Residues 2–253 are Intravirion; in internal conformation-facing; sequence GGWSSKPRQG…PGYRWMCLRR (252 aa). Tryptophan 4 carries an N-linked (GlcNAc...) asparagine glycan. A compositionally biased stretch (polar residues) spans 96–106; it reads STNRQSGRQPT. Residues 120 to 174 form a pre-S2 region; it reads MQWNSTTFHQALLDPRVRGLYFPAGGSSSGTVNPVPTTASPISSISSRTGDPAPN. Over residues 155-166 the composition is skewed to low complexity; it reads PTTASPISSISS. Residues 182–202 form a helical membrane-spanning segment; sequence FLGPLLVLQAGFFLLTRILTI. Residues 203-253 lie on the Intravirion; in external conformation side of the membrane; the sequence is PQSLDSWWTSLNFLGGAPTCPGQNSQSPTSNHSPTSCPPICPGYRWMCLRR. A helical membrane pass occupies residues 254-274; that stretch reads FIIFLFILLLCLIFLLVLLDY. Topologically, residues 275–348 are virion surface; the sequence is QGMLPVCPLL…GASVRFSWLS (74 aa). N-linked (GlcNAc...) asparagine; by host glycosylation occurs at asparagine 320. A helical transmembrane segment spans residues 349 to 369; that stretch reads LLVPFVQWFVGLSPTVWLSVI. Residues 370–375 are Intravirion-facing; the sequence is WMMWYW. A helical transmembrane segment spans residues 376–398; it reads GPSLYNILSPFLPLLPIFFCLWV. The Virion surface portion of the chain corresponds to 399–400; sequence YI.

This sequence belongs to the orthohepadnavirus major surface antigen family. In its internal form (Li-HBsAg), interacts with the capsid protein and with the isoform S. Interacts with host chaperone CANX. As to quaternary structure, associates with host chaperone CANX through its pre-S2 N glycan; this association may be essential for isoform M proper secretion. In terms of assembly, interacts with isoform L. Interacts with the antigens of satellite virus HDV (HDVAgs); this interaction is required for encapsidation of HDV genomic RNA. Isoform M is N-terminally acetylated by host at a ratio of 90%, and N-glycosylated by host at the pre-S2 region. In terms of processing, myristoylated.

Its subcellular location is the virion membrane. In terms of biological role, the large envelope protein exists in two topological conformations, one which is termed 'external' or Le-HBsAg and the other 'internal' or Li-HBsAg. In its external conformation the protein attaches the virus to cell receptors and thereby initiating infection. This interaction determines the species specificity and liver tropism. This attachment induces virion internalization predominantly through caveolin-mediated endocytosis. The large envelope protein also assures fusion between virion membrane and endosomal membrane. In its internal conformation the protein plays a role in virion morphogenesis and mediates the contact with the nucleocapsid like a matrix protein. Its function is as follows. The middle envelope protein plays an important role in the budding of the virion. It is involved in the induction of budding in a nucleocapsid independent way. In this process the majority of envelope proteins bud to form subviral lipoprotein particles of 22 nm of diameter that do not contain a nucleocapsid. The sequence is that of Large envelope protein from Hepatitis B virus genotype C subtype adr (strain Japan/adr4/1983) (HBV-C).